A 594-amino-acid chain; its full sequence is Probable Xaa-Pro aminopeptidase P (594 aa).

Mn(2+) is bound by residues D391, D402, E500, and E514.

Belongs to the peptidase M24B family. Requires Mn(2+) as cofactor.

The enzyme catalyses Release of any N-terminal amino acid, including proline, that is linked to proline, even from a dipeptide or tripeptide.. Its function is as follows. Catalyzes the removal of a penultimate prolyl residue from the N-termini of peptides. The protein is Probable Xaa-Pro aminopeptidase P (ampp) of Pyrenophora tritici-repentis (strain Pt-1C-BFP) (Wheat tan spot fungus).